Here is a 389-residue protein sequence, read N- to C-terminus: Chitin-binding protein CbpD (389 aa).

The signal sequence occupies residues 1–25 (MKHYSATLALLPLTLALFLPQAAHA). In terms of domain architecture, Chitin-binding type-4 spans 26 to 208 (HGSMETPPSR…EAFYACIDVS (183 aa)).

Post-translationally, can be detected in the extracellular supernatant as a 43 kDa protein and a 23 kDa protein, both proteins have the same N-terminus. Only the larger protein binds chitin, which may protect it from further processing and/or degradation by elastase (lasB). It is not clear whether the short form is functional or a degradation product.

The protein resides in the secreted. Its function is as follows. Binds chitin but does not hydrolyze it, has no detectable protease or staphylolytic activity. In Pseudomonas aeruginosa (strain ATCC 15692 / DSM 22644 / CIP 104116 / JCM 14847 / LMG 12228 / 1C / PRS 101 / PAO1), this protein is Chitin-binding protein CbpD.